The sequence spans 194 residues: Oligoribonuclease (194 aa).

An Exonuclease domain is found at 11–174 (LIWIDLEMTG…SDVRDSIDEL (164 aa)). Tyr132 is an active-site residue.

Belongs to the oligoribonuclease family.

Its subcellular location is the cytoplasm. 3'-to-5' exoribonuclease specific for small oligoribonucleotides. The polypeptide is Oligoribonuclease (Xanthomonas axonopodis pv. citri (strain 306)).